We begin with the raw amino-acid sequence, 61 residues long: UPF0370 protein Spro_3503 (61 aa).

A helical membrane pass occupies residues 3–23 (WLADYWWIILLILVGMIISGI). Residues 38-48 (KPELPPHRDNN) are compositionally biased toward basic and acidic residues. Residues 38-61 (KPELPPHRDNNAEWDDDDDWPKKK) form a disordered region. Acidic residues predominate over residues 49 to 61 (AEWDDDDDWPKKK).

Belongs to the UPF0370 family.

It is found in the cell membrane. The sequence is that of UPF0370 protein Spro_3503 from Serratia proteamaculans (strain 568).